A 537-amino-acid polypeptide reads, in one-letter code: Putative cysteine ligase BshC (537 aa).

Positions 422-450 (IEKVEGMIEQQRRLNQDLLDEVAGNQNNI) form a coiled coil.

The protein belongs to the BshC family.

Functionally, involved in bacillithiol (BSH) biosynthesis. May catalyze the last step of the pathway, the addition of cysteine to glucosamine malate (GlcN-Mal) to generate BSH. The sequence is that of Putative cysteine ligase BshC from Staphylococcus aureus (strain bovine RF122 / ET3-1).